Reading from the N-terminus, the 106-residue chain is Large ribosomal subunit protein eL30 (106 aa).

Belongs to the eukaryotic ribosomal protein eL30 family.

The polypeptide is Large ribosomal subunit protein eL30 (Methanococcus maripaludis (strain C7 / ATCC BAA-1331)).